We begin with the raw amino-acid sequence, 495 residues long: MAQNNAVAGFNALNGVELSLFTTDELKAIHYATMEVLMNPGVQVSDPEARQIFKENGCEVDEKTSIVKIPEYLVRRALQLAPSRFVLWGRDKKYNTVQEAGGKVHWTCFGTGVKMCKYQDGKYVTVDSVEQDIADIAKLCDWAENIDYFSLPVSARDWAGKGAQDVHETLTPIANTAKHYHHIDPVGEHVDYYRDIVKAYYGGDEEEARKKPIFSMLLCPTSPLELSVNACQVIIRGARFGMPVNVLSMAMSGGSSPVYLAGTLVTHNAEVLSGIVLAQLTVPGAKVWYGSSTTTFDLKKGTAPVGSPELGLISAAVAKLAQFYGLPSYVAGTOSDAKIPDNQAGHEKTMTCLLPALAGANTIYGAGMLELGMTFSMEQLVIDNDIIKMVKKAMQGIPVSPETLAVESIQKVGIGNNFLALKQTRMLVDYPSSPMLIDRRMFGDWAASGSKDLAAVANEKVQDILKNHQVPPVDADILKDMQAIVDKADRAFKEG.

A non-standard amino acid (pyrrolysine) is located at residue pyrrolysine 334.

Belongs to the trimethylamine methyltransferase family. Can form a complex with MttC.

The enzyme catalyses Co(I)-[trimethylamine-specific corrinoid protein] + trimethylamine + H(+) = methyl-Co(III)-[trimethylamine-specific corrinoid protein] + dimethylamine. The protein operates within one-carbon metabolism; methanogenesis from trimethylamine. Catalyzes the transfer of a methyl group from trimethylamine to the corrinoid cofactor of MttC. In Methanosarcina mazei (strain ATCC BAA-159 / DSM 3647 / Goe1 / Go1 / JCM 11833 / OCM 88) (Methanosarcina frisia), this protein is Trimethylamine methyltransferase MttB2 (mttB2).